Reading from the N-terminus, the 643-residue chain is Fructose-1,6-bisphosphatase class 3 (643 aa).

It belongs to the FBPase class 3 family. Mn(2+) is required as a cofactor.

The catalysed reaction is beta-D-fructose 1,6-bisphosphate + H2O = beta-D-fructose 6-phosphate + phosphate. The protein operates within carbohydrate biosynthesis; gluconeogenesis. This chain is Fructose-1,6-bisphosphatase class 3, found in Streptococcus agalactiae serotype Ia (strain ATCC 27591 / A909 / CDC SS700).